A 158-amino-acid polypeptide reads, in one-letter code: MRHAKSAYPDGIADHDRPLAPRGIREAGLAGGWLRANLPAVDAVLCSTATRARQTLAHTGIDAPARYAERLYGAAPGTVIEEINRVGDNVTTLLVVGHEPTTSALAIVLASISGTDAAVAERISEKFPTSGIAVLRVAGHWADVEPGCAALVGFHVPR.

It belongs to the SixA phosphatase family.

This is an uncharacterized protein from Mycobacterium tuberculosis (strain CDC 1551 / Oshkosh).